We begin with the raw amino-acid sequence, 51 residues long: Large ribosomal subunit protein eL39 (51 aa).

The segment at 1-22 (MAAQKSFRIKQKMAKAKKQNRP) is disordered. Residues 7–20 (FRIKQKMAKAKKQN) show a composition bias toward basic residues.

It belongs to the eukaryotic ribosomal protein eL39 family. As to quaternary structure, component of the large ribosomal subunit (LSU). Mature yeast ribosomes consist of a small (40S) and a large (60S) subunit. The 40S small subunit contains 1 molecule of ribosomal RNA (18S rRNA) and 33 different proteins (encoded by 57 genes). The large 60S subunit contains 3 rRNA molecules (25S, 5.8S and 5S rRNA) and 46 different proteins (encoded by 81 genes). eL39 interacts with YIH1.

The protein localises to the cytoplasm. In terms of biological role, component of the ribosome, a large ribonucleoprotein complex responsible for the synthesis of proteins in the cell. The small ribosomal subunit (SSU) binds messenger RNAs (mRNAs) and translates the encoded message by selecting cognate aminoacyl-transfer RNA (tRNA) molecules. The large subunit (LSU) contains the ribosomal catalytic site termed the peptidyl transferase center (PTC), which catalyzes the formation of peptide bonds, thereby polymerizing the amino acids delivered by tRNAs into a polypeptide chain. The nascent polypeptides leave the ribosome through a tunnel in the LSU and interact with protein factors that function in enzymatic processing, targeting, and the membrane insertion of nascent chains at the exit of the ribosomal tunnel. This is Large ribosomal subunit protein eL39 from Saccharomyces cerevisiae (strain ATCC 204508 / S288c) (Baker's yeast).